Here is a 343-residue protein sequence, read N- to C-terminus: Fanconi anemia group F protein (343 aa).

Belongs to the multisubunit FA complex composed of FANCA, FANCB, FANCC, FANCE, FANCF, FANCG, FANCL/PHF9 and FANCM. In complex with FANCA, FANCG and FANCL, but not with FANCC, nor FANCE, interacts with HES1; this interaction may be essential for the stability and nuclear localization of FA core complex proteins.

Its subcellular location is the nucleus. In terms of biological role, DNA repair protein that may operate in a postreplication repair or a cell cycle checkpoint function. May be implicated in interstrand DNA cross-link repair and in the maintenance of normal chromosome stability. The polypeptide is Fanconi anemia group F protein (Mus musculus (Mouse)).